Consider the following 260-residue polypeptide: 3-oxoadipate CoA-transferase subunit B (260 aa).

The active site involves E51.

This sequence belongs to the 3-oxoacid CoA-transferase subunit B family. In terms of assembly, heterotetramer composed of 2 A and 2 B subunits.

It catalyses the reaction 3-oxoadipate + succinyl-CoA = 3-oxoadipyl-CoA + succinate. Its pathway is aromatic compound metabolism; beta-ketoadipate pathway; acetyl-CoA and succinyl-CoA from 3-oxoadipate: step 1/2. This Pseudomonas knackmussii (strain DSM 6978 / CCUG 54928 / LMG 23759 / B13) protein is 3-oxoadipate CoA-transferase subunit B (catJ).